The sequence spans 277 residues: Undecaprenyl-diphosphatase (277 aa).

5 helical membrane passes run 83 to 103, 109 to 129, 188 to 208, 218 to 238, and 256 to 276; these read FALNIIIAFLPAALLGLVFAS, LFAPVPVAIAFIVGGFIILWI, ATEFSFFLAIPTLMGATVYSV, ADIPLFGLGGFAAFVSAFLCV, and YRIVFGLFVLLSAYYGWVVWA.

It belongs to the UppP family.

The protein localises to the cell inner membrane. It catalyses the reaction di-trans,octa-cis-undecaprenyl diphosphate + H2O = di-trans,octa-cis-undecaprenyl phosphate + phosphate + H(+). Catalyzes the dephosphorylation of undecaprenyl diphosphate (UPP). Confers resistance to bacitracin. The sequence is that of Undecaprenyl-diphosphatase from Janthinobacterium sp. (strain Marseille) (Minibacterium massiliensis).